Here is a 332-residue protein sequence, read N- to C-terminus: 5-dehydro-2-deoxygluconokinase 2 (332 aa).

This sequence belongs to the carbohydrate kinase PfkB family.

The catalysed reaction is 5-dehydro-2-deoxy-D-gluconate + ATP = 6-phospho-5-dehydro-2-deoxy-D-gluconate + ADP + H(+). It functions in the pathway polyol metabolism; myo-inositol degradation into acetyl-CoA; acetyl-CoA from myo-inositol: step 5/7. Its function is as follows. Catalyzes the phosphorylation of 5-dehydro-2-deoxy-D-gluconate (2-deoxy-5-keto-D-gluconate or DKG) to 6-phospho-5-dehydro-2-deoxy-D-gluconate (DKGP). The sequence is that of 5-dehydro-2-deoxygluconokinase 2 from Bacillus cereus (strain ZK / E33L).